Consider the following 119-residue polypeptide: Beta-2-microglobulin (119 aa).

The first 20 residues, 1 to 20 (MACSVVVALLALLSLSGLEA), serve as a signal peptide directing secretion. In terms of domain architecture, Ig-like C1-type spans 25 to 114 (PKIQVYSRHP…VTFSTPKTVK (90 aa)). A disulfide bridge connects residues C45 and C100.

It belongs to the beta-2-microglobulin family. In terms of assembly, heterodimer of an alpha chain and a beta chain. Beta-2-microglobulin is the beta-chain of major histocompatibility complex class I molecules.

It is found in the secreted. Functionally, component of the class I major histocompatibility complex (MHC). Involved in the presentation of peptide antigens to the immune system. The protein is Beta-2-microglobulin (B2M) of Mico emiliae (Emilia's marmoset).